A 293-amino-acid chain; its full sequence is MSSEPPPRRARGPGEEQNMTEIDAFPRREIFDPTEKYKMDHKRRGIALIFNHERFFWHLTLPNRPGTSADRDNLRRRFSDLGFEVKCFDDLRAEELLLKIHEASTASHVDADCFLCVFLSHGEGNHIYAYDAKIEIQTLTGLFKGDKCQSLVGKPKIFIIQACRGSQHDVPVIPLDVVDHRTDTPDANLTQVDAASVYTLPAGADFLMCYSVAEGYYSHRETVNGSWYIQDLCEMLGKFGSSLEFTELLTLVNRKVSQRRVDFCRDPNAIGKKQVPCFASMLTKKLHFSPKSK.

Positions 1–20 (MSSEPPPRRARGPGEEQNMT) are disordered. A propeptide spanning residues 1 to 23 (MSSEPPPRRARGPGEEQNMTEID) is cleaved from the precursor. The interval 42–44 (KRR) is tri-arginine exosite. S79 bears the Phosphoserine mark. H121 is a catalytic residue. The tract at residues 125–142 (NHIYAYDAKIEIQTLTGL) is 130's region. Residue C163 is part of the active site. Positions 180-193 (HRTDTPDANLTQVD) are excised as a propeptide. S257 carries the phosphoserine modification. S-palmitoyl cysteine attachment occurs at residues C264 and C277.

The protein belongs to the peptidase C14A family. In terms of assembly, heterotetramer that consists of two anti-parallel arranged heterodimers, each one formed by a 18 kDa (p18) and a 11 kDa (p11) subunits. Interacts with BIRC6/bruce. Interacts with RIPK3. Heterotetramer that consists of two anti-parallel arranged heterodimers, each one formed by a 18 kDa (Caspase-6 subunit p18) and a 11 kDa (Caspase-6 subunit p11) subunit. In terms of processing, phosphorylated by NUAK1; phosphorylation inhibits self-activation. Phosphorylation at Ser-257 by AMP-activated protein kinase (PRKAA1 or PRKAA2) inhibits autocleavage, preventing caspase activation, thereby preventing hepatocyte apoptosis. Post-translationally, palmitoylation by ZDHHC17 blocks dimerization and subsequent activation, leading to inhibit the cysteine protease activity. Can be cleaved and activated by different caspases, depending on the context. Cleaved and activated by caspase-8 (CASP8) and subsequently by caspase-3 (CASP3). Can also undergo autoactivation by mediating autocleavage at Asp-179 and Asp-193, while it is not able to cleave its N-terminal disordered prodomain. Cleaved and activated by CASP1, possibly in the context of inflammation.

The protein resides in the cytoplasm. The protein localises to the nucleus. It catalyses the reaction Strict requirement for Asp at position P1 and has a preferred cleavage sequence of Val-Glu-His-Asp-|-.. Its activity is regulated as follows. During activation, the N-terminal disordered prodomain is removed by cleavage. Concomitantly, double cleavage gives rise to a large 18-kDa and a small 11-kDa subunit. The two large and two small subunits then assemble to form the active CASP6 complex. Can be cleaved and activated by different caspases, depending on the context. Cleaved and activated by caspase-8 (CASP8) and subsequently by caspase-3 (CASP3). Can also undergo autoactivation by mediating autocleavage at Asp-179 and Asp-193, while it is not able to cleave its N-terminal disordered prodomain. Intramolecular cleavage at Asp-193 is a prerequisite for CASP6 self-activation. Cleaved and activated by CASP1 in neurons, possibly in the context of inflammation. Phosphorylation at Ser-257 inhibits autocleavage, preventing caspase activation. Its function is as follows. Cysteine protease that plays essential roles in programmed cell death, axonal degeneration, development and innate immunity. Acts as a non-canonical executioner caspase during apoptosis: localizes in the nucleus and cleaves the nuclear structural protein NUMA1 and lamin A/LMNA thereby inducing nuclear shrinkage and fragmentation. Lamin-A/LMNA cleavage is required for chromatin condensation and nuclear disassembly during apoptotic execution. Acts as a regulator of liver damage by promoting hepatocyte apoptosis: in absence of phosphorylation by AMP-activated protein kinase (AMPK), catalyzes cleavage of BID, leading to cytochrome c release, thereby participating in nonalcoholic steatohepatitis. Cleaves PARK7/DJ-1 in cells undergoing apoptosis. Involved in intrinsic apoptosis by mediating cleavage of RIPK1. Furthermore, cleaves many transcription factors such as NF-kappa-B and cAMP response element-binding protein/CREBBP. Cleaves phospholipid scramblase proteins XKR4 and XKR9. In addition to apoptosis, involved in different forms of programmed cell death. Plays an essential role in defense against viruses by acting as a central mediator of the ZBP1-mediated pyroptosis, apoptosis, and necroptosis (PANoptosis), independently of its cysteine protease activity. PANoptosis is a unique inflammatory programmed cell death, which provides a molecular scaffold that allows the interactions and activation of machinery required for inflammasome/pyroptosis, apoptosis and necroptosis. Mechanistically, interacts with RIPK3 and enhances the interaction between RIPK3 and ZBP1, leading to ZBP1-mediated inflammasome activation and cell death. Plays an essential role in axon degeneration during axon pruning which is the remodeling of axons during neurogenesis but not apoptosis. Regulates B-cell programs both during early development and after antigen stimulation. In Bos taurus (Bovine), this protein is Caspase-6.